The chain runs to 854 residues: Nucleolar MIF4G domain-containing protein 1 (854 aa).

The necessary for nucleolar localization and for targeting PPP1CA to the nucleolus stretch occupies residues 2–275 (PRNVPEVNGV…EEDPDWQVLQ (274 aa)). S60 is modified (phosphoserine). 2 disordered regions span residues 66-215 (ESRS…PLSF) and 231-333 (SGGG…GEKY). Residues 76-99 (PGGRKSRKELRKEKRHLRKARRLQ) show a composition bias toward basic residues. The segment covering 104-113 (SGSGDQGGNV) has biased composition (gly residues). Positions 128–173 (VRPTPAKATATPAKASAPSTNTKASAAQPKAKAKGAPGKPGPATAT) are enriched in low complexity. Residues 188–197 (REIRKLERCL) are compositionally biased toward basic and acidic residues. The segment covering 265–280 (SEEDPDWQVLQEDQED) has biased composition (acidic residues). Composition is skewed to basic and acidic residues over residues 281 to 291 (VNSKRRGEAES), 303 to 315 (RFAE…RSSS), and 322 to 331 (QESHSVESGE). Positions 301–304 (KVRF) match the Required for efficient binding to PPP1CA and for targeting PPP1CA to the nucleolus motif. Residues S311, S314, and S315 each carry the phosphoserine modification. Positions 356–553 (KKHVKGLINR…ETMLALKNND (198 aa)) constitute an MIF4G domain. Residues 648–764 (DVRRIIFCTL…PLSVLKVVEF (117 aa)) form the MI domain.

Belongs to the CWC22 family. In terms of assembly, may interact with EIF4A1, EIF4A2 and EIF4A3. Interacts with PPP1CA and PPP1CC.

It localises to the nucleus. Its subcellular location is the nucleolus. Plays a role in targeting PPP1CA to the nucleolus. In Mus musculus (Mouse), this protein is Nucleolar MIF4G domain-containing protein 1 (Nom1).